The chain runs to 363 residues: UDP-N-acetylenolpyruvoylglucosamine reductase (363 aa).

The 171-residue stretch at 27-197 (LGGWATRVVT…LSVDFRLARS (171 aa)) folds into the FAD-binding PCMH-type domain. Arg-175 is a catalytic residue. The active-site Proton donor is the Ser-252. Glu-355 is an active-site residue.

This sequence belongs to the MurB family. It depends on FAD as a cofactor.

The protein localises to the cytoplasm. It catalyses the reaction UDP-N-acetyl-alpha-D-muramate + NADP(+) = UDP-N-acetyl-3-O-(1-carboxyvinyl)-alpha-D-glucosamine + NADPH + H(+). The protein operates within cell wall biogenesis; peptidoglycan biosynthesis. Cell wall formation. The chain is UDP-N-acetylenolpyruvoylglucosamine reductase from Salinispora arenicola (strain CNS-205).